A 542-amino-acid chain; its full sequence is Ribonuclease Y (542 aa).

Residues 1 to 21 (MLIALIAVSVLAVAAIIGSLA) traverse the membrane as a helical segment. Residues 52 to 92 (SRASQDLADSRKDVAKARAELESSRTRASDEARRADNADQA) form a disordered region. Residues 59 to 92 (ADSRKDVAKARAELESSRTRASDEARRADNADQA) are compositionally biased toward basic and acidic residues. The KH domain maps to 229–289 (VVSVVPLPSN…MRREVARQAL (61 aa)). The HD domain occupies 355–449 (VLDHCVECAR…VKAADAISAA (95 aa)).

The protein belongs to the RNase Y family.

The protein resides in the cell membrane. Endoribonuclease that initiates mRNA decay. In Cutibacterium acnes (strain DSM 16379 / KPA171202) (Propionibacterium acnes), this protein is Ribonuclease Y.